Here is a 246-residue protein sequence, read N- to C-terminus: 1-(5-phosphoribosyl)-5-[(5-phosphoribosylamino)methylideneamino] imidazole-4-carboxamide isomerase (246 aa).

Catalysis depends on Asp12, which acts as the Proton acceptor. Asp134 serves as the catalytic Proton donor.

This sequence belongs to the HisA/HisF family.

The protein resides in the cytoplasm. It catalyses the reaction 1-(5-phospho-beta-D-ribosyl)-5-[(5-phospho-beta-D-ribosylamino)methylideneamino]imidazole-4-carboxamide = 5-[(5-phospho-1-deoxy-D-ribulos-1-ylimino)methylamino]-1-(5-phospho-beta-D-ribosyl)imidazole-4-carboxamide. It participates in amino-acid biosynthesis; L-histidine biosynthesis; L-histidine from 5-phospho-alpha-D-ribose 1-diphosphate: step 4/9. The polypeptide is 1-(5-phosphoribosyl)-5-[(5-phosphoribosylamino)methylideneamino] imidazole-4-carboxamide isomerase (Haloarcula marismortui (strain ATCC 43049 / DSM 3752 / JCM 8966 / VKM B-1809) (Halobacterium marismortui)).